Consider the following 106-residue polypeptide: UPF0145 protein Fphi_1781 (106 aa).

Belongs to the UPF0145 family.

The protein is UPF0145 protein Fphi_1781 of Francisella philomiragia subsp. philomiragia (strain ATCC 25017 / CCUG 19701 / FSC 153 / O#319-036).